The primary structure comprises 443 residues: GTPase Der (443 aa).

EngA-type G domains follow at residues 3 to 167 (PVIA…PEEK) and 176 to 349 (IKIA…QSIQ). GTP contacts are provided by residues 9–16 (GRPNVGKS), 56–60 (DTGGL), 119–122 (NKAD), 182–189 (GRPNVGKS), 229–233 (DTAGI), and 294–297 (NKWD). Positions 350-434 (QELTTGQLTR…PVHIKLKTDP (85 aa)) constitute a KH-like domain.

It belongs to the TRAFAC class TrmE-Era-EngA-EngB-Septin-like GTPase superfamily. EngA (Der) GTPase family. Associates with the 50S ribosomal subunit.

Functionally, GTPase that plays an essential role in the late steps of ribosome biogenesis. This is GTPase Der from Coxiella burnetii (strain CbuG_Q212) (Coxiella burnetii (strain Q212)).